Consider the following 244-residue polypeptide: MTRKTDDIFAAPLQEMIDFKFDERVVAVFPDMIQRSVPGYGMIISNIGILAAKYAQPGSHCYDLGCSLGAATLSMRQRISQRDCDIIAVDNSPAMIERGRELLARDSQPTVPVTLICADIQSVVIENASVVVLNFTLQFIPPEQRLALIKRIHAGLRPGGILILSEKIAFSEPARQHFHVEMHHDFKRANGYSDLEISQKRSALENVMIPETVACHKERLQEAGFSSSELWFQCFNFASMVAFK.

S-adenosyl-L-methionine-binding positions include Tyr40, 65–67 (GCS), 90–91 (DN), 119–120 (DI), Asn134, and Arg201.

Belongs to the class I-like SAM-binding methyltransferase superfamily. Cx-SAM synthase family. Homodimer.

The enzyme catalyses prephenate + S-adenosyl-L-methionine = carboxy-S-adenosyl-L-methionine + 3-phenylpyruvate + H2O. In terms of biological role, catalyzes the conversion of S-adenosyl-L-methionine (SAM) to carboxy-S-adenosyl-L-methionine (Cx-SAM). The sequence is that of Carboxy-S-adenosyl-L-methionine synthase from Geobacter sp. (strain M21).